A 597-amino-acid polypeptide reads, in one-letter code: Cytosolic Fe-S cluster assembly factor nar1 (597 aa).

[4Fe-4S] cluster is bound by residues cysteine 20, cysteine 61, cysteine 64, cysteine 67, cysteine 209, and cysteine 264. A disordered region spans residues 419 to 447 (PARASRLPGARQSATSAGGSRRQLASRNA). Positions 430–447 (QSATSAGGSRRQLASRNA) are enriched in polar residues. The [4Fe-4S] cluster site is built by cysteine 464 and cysteine 468. Residues 482 to 504 (EAASNMSVESQTEPPEAALKPTP) form a disordered region. Over residues 485-494 (SNMSVESQTE) the composition is skewed to polar residues.

Belongs to the NARF family.

Its function is as follows. Component of the cytosolic Fe/S protein assembly machinery. Required for maturation of extramitochondrial Fe/S proteins. May play a role in the transfer of pre-assembled Fe/S clusters to target apoproteins. This is Cytosolic Fe-S cluster assembly factor nar1 (nar1) from Aspergillus clavatus (strain ATCC 1007 / CBS 513.65 / DSM 816 / NCTC 3887 / NRRL 1 / QM 1276 / 107).